A 1018-amino-acid polypeptide reads, in one-letter code: MDKILEAVVTSSYPVSVKQGLVRRVLEAARQPLEREQCLALLALGARLYVGGAEELPRRVGCQLLHVAGRHHPDVFAEFFSARRVLRLLQGGAGPPGPRALACVQLGLQLLPEGPAADEVFALLRREVLRTVCERPGPAACAQVARLLARHPRCVPDGPHRLLFCQQLVRCLGRFRCPAEGEEGAVEFLEQAQQVSGLLAQLWRAQPAAILPCLKELFAVISCAEEEPPSSALASVVQHLPLELMDGVVRNLSNDDSVTDSQMLTAISRMIDWVSWPLGKNIDKWIIALLKGLAAVKKFSILIEVSLTKIEKVFSKLLYPIVRGAALSVLKYMLLTFQHSHEAFHLLLPHIPPMVASLVKEDSNSGTSCLEQLAELVHCMVFRFPGFPDLYEPVMEAIKDLHVPNEDRIKQLLGQDAWTSQKSELAGFYPRLMAKSDTGKIGLINLGNTCYVNSILQALFMASDFRHCVLRLTENNSQPLMTKLQWLFGFLEHSQRPAISPENFLSASWTPWFSPGTQQDCSEYLKYLLDRLHEEEKTGTRICQKLKQSSSPSPPEEPPAPSSTSVEKMFGGKIVTRICCLCCLNVSSREEAFTDLSLAFPPPERCRRRRLGSVMRPTEDITARELPPPTSAQGPGRVGPRRQRKHCITEDTPPTSLYIEGLDSKEAGGQSSQEERIEREEEGKEERTEKEEVGEEEESTRGEGEREKEEEVEEEEEKVEKETEKEAEQEKEEDSLGAGTHPDAAIPSGERTCGSEGSRSVLDLVNYFLSPEKLTAENRYYCESCASLQDAEKVVELSQGPCYLILTLLRFSFDLRTMRRRKILDDVSIPLLLRLPLAGGRGQAYDLCSVVVHSGVSSESGHYYCYAREGAARPAASLGTADRPEPENQWYLFNDTRVSFSSFESVSNVTSFFPKDTAYVLFYRQRPREGPEAELGSSRVRTEPTLHKDLMEAISKDNILYLQEQEKEARSRAAYISALPTSPHWGRGFDEDKDEDEGSPGGCNPAGGNGGDFHRLVF.

The USP domain maps to 441–926; the sequence is IGLINLGNTC…TAYVLFYRQR (486 aa). Cysteine 450 functions as the Nucleophile in the catalytic mechanism. Disordered regions lie at residues 544–566 and 610–757; these read QKLK…STSV and RLGS…GSEG. The segment covering 552–561 has biased composition (pro residues); the sequence is PSPPEEPPAP. The residue at position 613 (serine 613) is a Phosphoserine. Composition is skewed to basic and acidic residues over residues 673–691, 699–709, and 718–728; these read QEER…TEKE, STRGEGEREKE, and KVEKETEKEAE. The active-site Proton acceptor is the histidine 862. The segment at 984-1011 is disordered; it reads HWGRGFDEDKDEDEGSPGGCNPAGGNGG. Residues 999-1011 are compositionally biased toward gly residues; the sequence is SPGGCNPAGGNGG.

This sequence belongs to the peptidase C19 family. As to quaternary structure, homodimer (via C-terminal region). Interacts with HSP90AA1. Ubiquitinated by CHIP/STUB1 in an HSP90-dependent manner; leading to proteasomal degradation. This ubiquitination can be reversed through auto-deubiquitinating activity. Expressed in testis, pancreas and skeletal muscle.

The protein localises to the cytoplasm. It is found in the mitochondrion. The enzyme catalyses Thiol-dependent hydrolysis of ester, thioester, amide, peptide and isopeptide bonds formed by the C-terminal Gly of ubiquitin (a 76-residue protein attached to proteins as an intracellular targeting signal).. Its function is as follows. Deubiquitinase that plays a role in different processes including cell cycle regulation, mitophagy or endoplasmic reticulum stress. Inhibits TNFalpha-induced NF-kappa-B activation through stabilizing TNIP2 protein via deubiquitination. Plays an essential role during mitosis by deubiquitinating and thereby regulating the levels of Aurora B/AURKB protein. In addition, regulates the protein levels of other key component of the chromosomal passenger complex (CPC) such as survivin/BIRC5 or Borealin/CDCA8 by enhancing their stability. Regulates the degradation of mitochondria through the process of autophagy termed mitophagy. The polypeptide is Ubiquitin carboxyl-terminal hydrolase 35 (USP35) (Homo sapiens (Human)).